The following is a 417-amino-acid chain: Maltodextrin-binding protein MdxE (417 aa).

Residues 1–22 (MVLLKKGFAILAASFLAIGLAA) form the signal peptide. Residue Cys23 is the site of N-palmitoyl cysteine attachment. Cys23 is lipidated: S-diacylglycerol cysteine.

This sequence belongs to the bacterial solute-binding protein 1 family. In terms of assembly, the complex is composed of two ATP-binding proteins (MsmX), two transmembrane proteins (MdxF and MdxG) and a solute-binding protein (MdxE).

It localises to the cell membrane. Its activity is regulated as follows. Inhibited by glucose and lactose. Functionally, part of the ABC transporter complex involved in maltodextrin import. Binds maltodextrin. Can also bind maltose with low affinity, but is not involved in its uptake. The polypeptide is Maltodextrin-binding protein MdxE (mdxE) (Bacillus subtilis (strain 168)).